The chain runs to 297 residues: Streptogrisin-A (297 aa).

An N-terminal signal peptide occupies residues 1-38 (MTFKRFSPLSSTSRYARLLAVASGLVAAAALATPSAVA). Positions 39 to 115 (APEAESKATV…VKRAEGKFTP (77 aa)) are excised as a propeptide. Cysteine 130 and cysteine 150 are oxidised to a cystine. Active-site charge relay system residues include histidine 149, aspartate 171, and serine 253. Residues cysteine 247 and cysteine 274 are joined by a disulfide bond.

This sequence belongs to the peptidase S1 family. As to quaternary structure, monomer.

The catalysed reaction is Hydrolysis of proteins with specificity similar to chymotrypsin.. In terms of biological role, has a primary specificity for large aliphatic or aromatic amino acids. This Streptomyces griseus protein is Streptogrisin-A (sprA).